Reading from the N-terminus, the 672-residue chain is Negative growth regulatory protein NGR1 (672 aa).

Met-1 carries the N-acetylmethionine modification. Composition is skewed to polar residues over residues 1 to 13 and 23 to 32; these read MMSNVANASQRQE and SSTVETSTEP. Disordered stretches follow at residues 1 to 40 and 77 to 102; these read MMSNVANASQRQENPYIIPLPPSSTVETSTEPPRTLWMGD and SSTSSSNNNTSEENAENQQSASNSTD. Met-2 is subject to N-acetylserine. RRM domains are found at residues 36 to 159, 192 to 271, and 360 to 432; these read LWMG…YSPT, FSLF…YATP, and TTVF…WGRP. Positions 77–96 are enriched in low complexity; that stretch reads SSTSSSNNNTSEENAENQQS. Ser-524 carries the post-translational modification Phosphoserine. Residues 640-672 form a disordered region; that stretch reads LNIAPNSNNSKSSIMNKHPNRNNVPPIHPSLLH. The span at 645 to 656 shows a compositional bias: low complexity; that stretch reads NSNNSKSSIMNK.

May be an RNA-binding protein involved in control of an RNA processing pathway that influences the regulation of cell growth in early log phase. Can bind to RNA and single-stranded DNA but not double-stranded DNA. The chain is Negative growth regulatory protein NGR1 (NGR1) from Saccharomyces cerevisiae (strain ATCC 204508 / S288c) (Baker's yeast).